Reading from the N-terminus, the 279-residue chain is MLNCYLAFPKYDPIIFSVGRFSAHWYGLMYLIGFYFIMWSSIKRYKLISLNKEKIENILYFSFLNALIGGRIGYVIFYKTKEIFFNPYFIFKVWEGGMSFHGGLLGSIISIYYFSKKYNCKFFKISDFLVPLIPFGLGFGRIGNFINGELWGRVNTSFCFTMLFPGSYDEDVKFLLNNPHLQDVFDKYHLLPRHISQLYEMFLEGILLFIILNIFEKKKKPTGYMSGLFLILYGSFRIIAEFFRQPDPQIGLMFNYISLGQILSIPMILYGLILIINSK.

Helical transmembrane passes span 22–42, 58–78, 89–109, 128–148, 195–215, 223–243, and 256–276; these read SAHWYGLMYLIGFYFIMWSSI, ILYFSFLNALIGGRIGYVIFY, FIFKVWEGGMSFHGGLLGSII, FLVPLIPFGLGFGRIGNFING, ISQLYEMFLEGILLFIILNIF, GYMSGLFLILYGSFRIIAEFF, and YISLGQILSIPMILYGLILII. Residue Arg141 coordinates a 1,2-diacyl-sn-glycero-3-phospho-(1'-sn-glycerol).

It belongs to the Lgt family.

It localises to the cell membrane. It carries out the reaction L-cysteinyl-[prolipoprotein] + a 1,2-diacyl-sn-glycero-3-phospho-(1'-sn-glycerol) = an S-1,2-diacyl-sn-glyceryl-L-cysteinyl-[prolipoprotein] + sn-glycerol 1-phosphate + H(+). It functions in the pathway protein modification; lipoprotein biosynthesis (diacylglyceryl transfer). Catalyzes the transfer of the diacylglyceryl group from phosphatidylglycerol to the sulfhydryl group of the N-terminal cysteine of a prolipoprotein, the first step in the formation of mature lipoproteins. The polypeptide is Phosphatidylglycerol--prolipoprotein diacylglyceryl transferase (Wigglesworthia glossinidia brevipalpis).